The sequence spans 354 residues: Variable large protein 15/16 (354 aa).

The signal sequence occupies residues 1–18; that stretch reads MRKRISAIIMTLFMVLVS. C19 carries N-palmitoyl cysteine lipidation. C19 carries the S-diacylglycerol cysteine lipid modification. Residues 333–354 form a disordered region; that stretch reads EDKSVEATNTAEATTSGQQAKN. Residues 338 to 354 show a composition bias toward polar residues; it reads EATNTAEATTSGQQAKN.

It belongs to the variable large protein (Vlp) family. Delta subfamily.

The protein resides in the cell outer membrane. Its function is as follows. The Vlp and Vsp proteins are antigenically distinct proteins, only one vlp or vsp gene is transcriptionally active at any one time. Switching between these genes is a mechanism of host immune response evasion. The polypeptide is Variable large protein 15/16 (Borrelia hermsii).